Reading from the N-terminus, the 508-residue chain is UTP--glucose-1-phosphate uridylyltransferase (508 aa).

The residue at position 2 (Ser2) is a Blocked amino end (Ser). Phosphoserine is present on Ser13. UTP contacts are provided by residues 113–116 (LNGG), Lys127, Gln190, and Gly222. Residue 115–116 (GG) coordinates substrate. Lys127 is a binding site for Mg(2+). Substrate-binding positions include His223 and 251 to 253 (NID). UTP-binding residues include Asp253 and Lys396. Asp253 lines the Mg(2+) pocket. The active site involves Lys396. Residue Thr426 is modified to Phosphothreonine. Position 434 is a phosphoserine (Ser434). Residue Lys438 is modified to N6-acetyllysine. Residues Ser448 and Ser461 each carry the phosphoserine modification. The tract at residues 457–508 (HLTVSGDVTFGKNVSLKGTVIIIANHGDRIDIPPGAVLENKIVSGNLRILDH) is oligomerization. A critical for end-to-end subunit interaction region spans residues 502 to 503 (NL).

The protein belongs to the UDPGP type 1 family. As to quaternary structure, homooctamer.

The protein localises to the cytoplasm. The catalysed reaction is alpha-D-glucose 1-phosphate + UTP + H(+) = UDP-alpha-D-glucose + diphosphate. The protein operates within glycan biosynthesis; glycogen biosynthesis. UTP--glucose-1-phosphate uridylyltransferase catalyzing the conversion of glucose-1-phosphate into UDP-glucose, a crucial precursor for the production of glycogen. In Bos taurus (Bovine), this protein is UTP--glucose-1-phosphate uridylyltransferase (UGP2).